The following is a 218-amino-acid chain: MNKDKIRVALADDQPLVREGFRYVINAQTDMTVSGEAGDGHDIIALAKQTKPDVILMDVQMPRCSGIEAAKDIMSALPNTKIVILTTFDTEEYVFEGIRAGAVGYLLKDTLPEELIDAIRAAARGEAIFRTVTAAKIISETFRAKQQTHAEELAEPFTKRELEVLQQMAYGLRNEDIAEKLFVSESTVKTHVHRILQKCNAQDRTQAVVFAIRNGIVQ.

A Response regulatory domain is found at 7–123; that stretch reads RVALADDQPL…ELIDAIRAAA (117 aa). Asp-58 bears the 4-aspartylphosphate mark. The region spanning 150–215 is the HTH luxR-type domain; it reads AEELAEPFTK…QAVVFAIRNG (66 aa). The H-T-H motif DNA-binding region spans 174-193; sequence NEDIAEKLFVSESTVKTHVH.

Post-translationally, phosphorylated by YxjM.

It localises to the cytoplasm. In terms of biological role, probable member of the two-component regulatory system YxjM/YxjL. This is an uncharacterized protein from Bacillus subtilis (strain 168).